A 305-amino-acid chain; its full sequence is Probable lipid kinase YegS-like (305 aa).

The DAGKc domain maps to 1-129; the sequence is MTQRRAMLIL…VDLGEVGGKL (129 aa). ATP-binding positions include T39, 65-71, and T92; that span reads GDGTLRD. Residues L210, D213, and L215 each coordinate Mg(2+). E268 acts as the Proton acceptor in catalysis.

Belongs to the diacylglycerol/lipid kinase family. YegS lipid kinase subfamily. Mg(2+) is required as a cofactor. The cofactor is Ca(2+).

It is found in the cytoplasm. In terms of biological role, probably phosphorylates lipids; the in vivo substrate is unknown. In Pseudomonas syringae pv. tomato (strain ATCC BAA-871 / DC3000), this protein is Probable lipid kinase YegS-like.